Consider the following 107-residue polypeptide: UPF0122 protein MYPE4850 (107 aa).

The protein belongs to the UPF0122 family.

Might take part in the signal recognition particle (SRP) pathway. This is inferred from the conservation of its genetic proximity to ftsY/ffh. May be a regulatory protein. The polypeptide is UPF0122 protein MYPE4850 (Malacoplasma penetrans (strain HF-2) (Mycoplasma penetrans)).